Reading from the N-terminus, the 507-residue chain is Glycerol kinase (507 aa).

Thr13 contacts ADP. The ATP site is built by Thr13, Thr14, and Ser15. Thr13 is a binding site for sn-glycerol 3-phosphate. Position 17 (Arg17) interacts with ADP. Sn-glycerol 3-phosphate-binding residues include Arg83, Glu84, Tyr135, and Asp245. 5 residues coordinate glycerol: Arg83, Glu84, Tyr135, Asp245, and Gln246. ADP contacts are provided by Thr267 and Gly310. ATP-binding residues include Thr267, Gly310, Gln314, and Gly411. Positions 411 and 415 each coordinate ADP.

It belongs to the FGGY kinase family.

It catalyses the reaction glycerol + ATP = sn-glycerol 3-phosphate + ADP + H(+). It participates in polyol metabolism; glycerol degradation via glycerol kinase pathway; sn-glycerol 3-phosphate from glycerol: step 1/1. Inhibited by fructose 1,6-bisphosphate (FBP). Key enzyme in the regulation of glycerol uptake and metabolism. Catalyzes the phosphorylation of glycerol to yield sn-glycerol 3-phosphate. This chain is Glycerol kinase, found in Halorhodospira halophila (strain DSM 244 / SL1) (Ectothiorhodospira halophila (strain DSM 244 / SL1)).